An 864-amino-acid chain; its full sequence is 3-O-alpha-D-mannopyranosyl-alpha-D-mannopyranose xylosylphosphotransferase (864 aa).

A disordered region spans residues 1 to 66 (MPSTALSPPS…VPPRSPSRKI (66 aa)). Residues 1 to 82 (MPSTALSPPS…HIRPHITPRT (82 aa)) lie on the Cytoplasmic side of the membrane. 2 stretches are compositionally biased toward low complexity: residues 16-29 (SYDS…PSSP) and 42-52 (SPSPSRLESLL). The chain crosses the membrane as a helical span at residues 83-103 (LTPVFLWTLALWLIHHFLFPL). At 104–864 (SSPFAKLAKP…WDPVKDRYND (761 aa)) the chain is on the lumenal side. 3 N-linked (GlcNAc...) asparagine glycosylation sites follow: asparagine 200, asparagine 301, and asparagine 583.

This sequence belongs to the XPT1 family. The cofactor is Mn(2+).

It is found in the golgi apparatus membrane. It carries out the reaction 3-alpha-D-mannopyranosyl-alpha-D-mannopyranose + UDP-alpha-D-xylose = 3-O-(6-O-alpha-D-xylosylphospho-alpha-D-mannopyranosyl)-alpha-D-mannopyranose + UMP + H(+). Xylosylphosphotransferase that is specific for UDP-xylose as a donor and mannose as an acceptor to form a xylose-alpha-1-phosphate-6-mannose linkage. Functions in the O-glycosylation of proteins en route through the secretory pathway. The protein is 3-O-alpha-D-mannopyranosyl-alpha-D-mannopyranose xylosylphosphotransferase (XPT1) of Cryptococcus neoformans var. grubii (Filobasidiella neoformans var. grubii).